The chain runs to 114 residues: Nuclear transition protein 2 (114 aa).

Positions 1 to 114 are disordered; it reads MDTKMQSLPT…KRRSSGRRYK (114 aa). The Zn(2+) site is built by His-12, His-14, His-16, His-24, Cys-29, Cys-31, Cys-35, and Cys-38. Positions 16–25 are enriched in low complexity; sequence HSSSRPQSHT. Residues 87–95 carry the Nuclear localization signal motif; the sequence is GKVSKRKAV. Residues 90–114 show a composition bias toward basic residues; that stretch reads SKRKAVRRRKRTHRAKRRSSGRRYK. A Phosphothreonine; by PKA modification is found at Thr-101. Ser-109 is subject to Phosphoserine; by PKA.

This sequence belongs to the nuclear transition protein 2 family. In terms of tissue distribution, testis.

The protein localises to the nucleus. Its subcellular location is the nucleolus. It localises to the chromosome. Its function is as follows. Plays a key role in the replacement of histones to protamine in the elongating spermatids of mammals. In condensing spermatids, loaded onto the nucleosomes, where it promotes the recruitment and processing of protamines, which are responsible for histone eviction. The chain is Nuclear transition protein 2 (Tnp2) from Rattus norvegicus (Rat).